The chain runs to 111 residues: MSALQAYRHLMRAARVAFDGDNRTLTAAYESIRRGFRENQNVPANDPTIAPAIAHAEEVASFLRSNVVQGRKDGETYKLRIHQDTERGDNDTIKLGNQTIKIGGEQKCCSA.

The protein belongs to the complex I LYR family. MZM1 subfamily. Interacts with RIP1.

It localises to the mitochondrion matrix. Assembly factor required for Rieske Fe-S protein RIP1 incorporation into the cytochrome b-c1 (CIII) complex. Functions as a chaperone, binding to this subunit within the mitochondrial matrix and stabilizing it prior to its translocation and insertion into the late CIII dimeric intermediate within the mitochondrial inner membrane. Modulates the mitochondrial matrix zinc pool. This chain is Mitochondrial zinc maintenance protein 1, mitochondrial (mzm1), found in Neurospora crassa (strain ATCC 24698 / 74-OR23-1A / CBS 708.71 / DSM 1257 / FGSC 987).